Reading from the N-terminus, the 1606-residue chain is MLLHLCSVKNLYQNRFLGLAAMASPSRNSQSRRRCKEPLRYSYNPDQFHNMDLRGGPHDGVTIPRSTSDTDLVTSDSRSTLMVSSSYYSIGHSQDLVIHWDIKEEVDAGDWIGMYLIDEVLSENFLDYKNRGVNGSHRGQIIWKIDASSYFVEPETKICFKYYHGVSGALRATTPSVTVKNSAAPIFKSIGADETVQGQGSRRLISFSLSDFQAMGLKKGMFFNPDPYLKISIQPGKHSIFPALPHHGQERRSKIIGNTVNPIWQAEQFSFVSLPTDVLEIEVKDKFAKSRPIIKRFLGKLSMPVQRLLERHAIGDRVVSYTLGRRLPTDHVSGQLQFRFEITSSIHPDDEEISLSTEPESAQIQDSPMNNLMESGSGEPRSEAPESSESWKPEQLGEGSVPDGPGNQSIELSRPAEEAAVITEAGDQGMVSVGPEGAGELLAQVQKDIQPAPSAEELAEQLDLGEEASALLLEDGEAPASTKEEPLEEEATTQSRAGREEEEKEQEEEGDVSTLEQGEGRLQLRASVKRKSRPCSLPVSELETVIASACGDPETPRTHYIRIHTLLHSMPSAQGGSAAEEEDGAEEESTLKDSSEKDGLSEVDTVAADPSALEEDREEPEGATPGTAHPGHSGGHFPSLANGAAQDGDTHPSTGSESDSSPRQGGDHSCEGCDASCCSPSCYSSSCYSTSCYSSSCYSASCYSPSCYNGNRFASHTRFSSVDSAKISESTVFSSQDDEEEENSAFESVPDSMQSPELDPESTNGAGPWQDELAAPSGHVERSPEGLESPVAGPSNRREGECPILHNSQPVSQLPSLRPEHHHYPTIDEPLPPNWEARIDSHGRVFYVDHVNRTTTWQRPTAAATPDGMRRSGSIQQMEQLNRRYQNIQRTIATERSEEDSGSQSCEQAPAGGGGGGGSDSEAESSQSSLDLRREGSLSPVNSQKITLLLQSPAVKFITNPEFFTVLHANYSAYRVFTSSTCLKHMILKVRRDARNFERYQHNRDLVNFINMFADTRLELPRGWEIKTDQQGKSFFVDHNSRATTFIDPRIPLQNGRLPNHLTHRQHLQRLRSYSAGEASEVSRNRGASLLARPGHSLVAAIRSQHQHESLPLAYNDKIVAFLRQPNIFEMLQERQPSLARNHTLREKIHYIRTEGNHGLEKLSCDADLVILLSLFEEEIMSYVPLQAAFHPGYSFSPRCSPCSSPQNSPGLQRASARAPSPYRRDFEAKLRNFYRKLEAKGFGQGPGKIKLIIRRDHLLEGTFNQVMAYSRKELQRNKLYVTFVGEEGLDYSGPSREFFFLLSQELFNPYYGLFEYSANDTYTVQISPMSAFVENHLEWFRFSGRILGLALIHQYLLDAFFTRPFYKALLRLPCDLSDLEYLDEEFHQSLQWMKDNNITDILDLTFTVNEEVFGQVTERELKSGGANTQVTEKNKKEYIERMVKWRVERGVVQQTEALVRGFYEVVDSRLVSVFDARELELVIAGTAEIDLNDWRNNTEYRGGYHDGHLVIRWFWAAVERFNNEQRLRLLQFVTGTSSVPYEGFAALRGSNGLRRFCIEKWGKITSLPRAHTCFNRLDLPPYPSYSMLYEKLLTAVEETSTFGLE.

Residues 182–318 enclose the C2 domain; the sequence is SAAPIFKSIG…LERHAIGDRV (137 aa). Disordered stretches follow at residues 349–418, 459–538, 566–672, and 730–815; these read DDEE…PAEE, AEQL…CSLP, LLHS…SCEG, and STVF…SQLP. Residues 354 to 373 are compositionally biased toward polar residues; the sequence is SLSTEPESAQIQDSPMNNLM. Over residues 380–392 the composition is skewed to basic and acidic residues; it reads PRSEAPESSESWK. 2 stretches are compositionally biased toward acidic residues: residues 500–511 and 579–588; these read EEEEKEQEEEGD and AEEEDGAEEE. Positions 589-600 are enriched in basic and acidic residues; it reads STLKDSSEKDGL. A compositionally biased stretch (acidic residues) spans 612–621; it reads ALEEDREEPE. Composition is skewed to polar residues over residues 651-663, 751-765, and 806-815; these read HPST…SSPR, DSMQ…STNG, and HNSQPVSQLP. Residues 829 to 862 form the WW 1 domain; the sequence is EPLPPNWEARIDSHGRVFYVDHVNRTTTWQRPTA. Residues 870–901 adopt a coiled-coil conformation; the sequence is RRSGSIQQMEQLNRRYQNIQRTIATERSEEDS. Residues serine 874, serine 937, and serine 939 each carry the phosphoserine modification. Residues 894 to 938 form a disordered region; that stretch reads TERSEEDSGSQSCEQAPAGGGGGGGSDSEAESSQSSLDLRREGSL. The WW 2 domain maps to 1018–1051; it reads LELPRGWEIKTDQQGKSFFVDHNSRATTFIDPRI. The 336-residue stretch at 1271–1606 folds into the HECT domain; the sequence is SRKELQRNKL…VEETSTFGLE (336 aa). Cysteine 1574 acts as the Glycyl thioester intermediate in catalysis.

Interacts with DVL1 and SSR3. Also interacts with mutant SOD1. As to expression, predominantly expressed in neurons of adult and fetal brain. Weakly expressed in the kidney.

It localises to the cytoplasm. It carries out the reaction S-ubiquitinyl-[E2 ubiquitin-conjugating enzyme]-L-cysteine + [acceptor protein]-L-lysine = [E2 ubiquitin-conjugating enzyme]-L-cysteine + N(6)-ubiquitinyl-[acceptor protein]-L-lysine.. The protein operates within protein modification; protein ubiquitination. Functionally, E3 ubiquitin-protein ligase that mediates ubiquitination and subsequent degradation of DVL1. Also targets the mutant SOD1 protein involved in familial amyotrophic lateral sclerosis (FALS). Forms cytotoxic aggregates with DVL1, SSR3 and mutant SOD1 that lead to motor neuron death in FALS. The protein is E3 ubiquitin-protein ligase HECW1 (HECW1) of Homo sapiens (Human).